Reading from the N-terminus, the 514-residue chain is Cobyric acid synthase (514 aa).

A GATase cobBQ-type domain is found at 258-458 (ALMVGVVRLP…IHGIFDNDGL (201 aa)). Cysteine 339 (nucleophile) is an active-site residue. The active site involves histidine 450.

This sequence belongs to the CobB/CobQ family. CobQ subfamily.

Its pathway is cofactor biosynthesis; adenosylcobalamin biosynthesis. Its function is as follows. Catalyzes amidations at positions B, D, E, and G on adenosylcobyrinic A,C-diamide. NH(2) groups are provided by glutamine, and one molecule of ATP is hydrogenolyzed for each amidation. This Syntrophobacter fumaroxidans (strain DSM 10017 / MPOB) protein is Cobyric acid synthase.